Reading from the N-terminus, the 313-residue chain is Protein FixB (313 aa).

Residue 255-283 (LYLAVGISGQIQHMVGANASQTIFAINKD) coordinates FAD.

It belongs to the ETF alpha-subunit/FixB family. In terms of assembly, heterodimer of FixA and FixB.

It participates in amine and polyamine metabolism; carnitine metabolism. Functionally, required for anaerobic carnitine reduction. May bring reductant to CaiA. This is Protein FixB from Escherichia coli O8 (strain IAI1).